Consider the following 328-residue polypeptide: Aspartate carbamoyltransferase catalytic subunit (328 aa).

Carbamoyl phosphate contacts are provided by arginine 64 and threonine 65. Lysine 92 lines the L-aspartate pocket. 3 residues coordinate carbamoyl phosphate: arginine 114, histidine 144, and glutamine 147. Positions 177 and 232 each coordinate L-aspartate. Carbamoyl phosphate contacts are provided by glycine 273 and proline 274.

The protein belongs to the aspartate/ornithine carbamoyltransferase superfamily. ATCase family. As to quaternary structure, heterododecamer (2C3:3R2) of six catalytic PyrB chains organized as two trimers (C3), and six regulatory PyrI chains organized as three dimers (R2).

It carries out the reaction carbamoyl phosphate + L-aspartate = N-carbamoyl-L-aspartate + phosphate + H(+). It functions in the pathway pyrimidine metabolism; UMP biosynthesis via de novo pathway; (S)-dihydroorotate from bicarbonate: step 2/3. Catalyzes the condensation of carbamoyl phosphate and aspartate to form carbamoyl aspartate and inorganic phosphate, the committed step in the de novo pyrimidine nucleotide biosynthesis pathway. The chain is Aspartate carbamoyltransferase catalytic subunit from Halorhodospira halophila (strain DSM 244 / SL1) (Ectothiorhodospira halophila (strain DSM 244 / SL1)).